The following is a 341-amino-acid chain: Methionine import ATP-binding protein MetN (341 aa).

An ABC transporter domain is found at 2 to 237 (IELCGLKKSF…PESLARKMLY (236 aa)). 34–41 (GKSGAGKS) contributes to the ATP binding site.

This sequence belongs to the ABC transporter superfamily. Methionine importer (TC 3.A.1.24) family. As to quaternary structure, the complex is composed of two ATP-binding proteins (MetN), two transmembrane proteins (MetI) and a solute-binding protein (MetQ).

Its subcellular location is the cell inner membrane. It catalyses the reaction L-methionine(out) + ATP + H2O = L-methionine(in) + ADP + phosphate + H(+). It carries out the reaction D-methionine(out) + ATP + H2O = D-methionine(in) + ADP + phosphate + H(+). Functionally, part of the ABC transporter complex MetNIQ involved in methionine import. Responsible for energy coupling to the transport system. The chain is Methionine import ATP-binding protein MetN from Legionella pneumophila (strain Lens).